Consider the following 225-residue polypeptide: Small ribosomal subunit protein uS3 (225 aa).

One can recognise a KH type-2 domain in the interval 16 to 85; that stretch reads VCEYVVKETE…TPQIEVKDVK (70 aa). Residues 202–225 form a disordered region; sequence EVGTESKADQTDVEGRETGNAEES. Residues 205–225 show a composition bias toward basic and acidic residues; it reads TESKADQTDVEGRETGNAEES.

Belongs to the universal ribosomal protein uS3 family. Part of the 30S ribosomal subunit.

Binds the lower part of the 30S subunit head. The protein is Small ribosomal subunit protein uS3 of Thermoplasma acidophilum (strain ATCC 25905 / DSM 1728 / JCM 9062 / NBRC 15155 / AMRC-C165).